A 289-amino-acid polypeptide reads, in one-letter code: Bidirectional sugar transporter SWEET11 (289 aa).

Residues 1–9 (MSLFNTENT) lie on the Extracellular side of the membrane. Residues 10-30 (WAFVFGLLGNLISFAVFLSPV) traverse the membrane as a helical segment. In terms of domain architecture, MtN3/slv 1 spans 12-98 (FVFGLLGNLI…SMFLAYAPKP (87 aa)). Residues 31–43 (PTFYRIWKKKTTE) are Cytoplasmic-facing. The helical transmembrane segment at 44–64 (GFQSIPYVVALFSATLWLYYA) threads the bilayer. Residues 65 to 70 (TQKKDV) are Extracellular-facing. Residues 71-91 (FLLVTINAFGCFIETIYISMF) traverse the membrane as a helical segment. The Cytoplasmic segment spans residues 92 to 105 (LAYAPKPARMLTVK). The helical transmembrane segment at 106–126 (MLLLMNFGGFCAILLLCQFLV) threads the bilayer. The Extracellular portion of the chain corresponds to 127–133 (KGATRAK). The helical transmembrane segment at 134–154 (IIGGICVGFSVCVFAAPLSII) threads the bilayer. Residues 134 to 218 (IIGGICVGFS…ILYVVYKYCK (85 aa)) form the MtN3/slv 2 domain. The Cytoplasmic segment spans residues 155 to 167 (RTVIKTRSVEYMP). A helical transmembrane segment spans residues 168–188 (FSLSLTLTISAVIWLLYGLAL). Topologically, residues 189 to 192 (KDIY) are extracellular. Residues 193–213 (VAFPNVLGFALGALQMILYVV) traverse the membrane as a helical segment. Topologically, residues 214 to 289 (YKYCKTSPHL…GKQSSSAAAT (76 aa)) are cytoplasmic. Residues 266-289 (DRRAEIEDGQTPKHGKQSSSAAAT) are disordered. Position 276 is a phosphothreonine (Thr-276).

Belongs to the SWEET sugar transporter family. As to quaternary structure, forms homooligomers and heterooligomers with SWEET1, SWEET3, SWEET5, SWEET6, SWEET7, SWEET8, SWEET9, SWEET12, SWEET13, SWEET15 and SWEET17. In terms of tissue distribution, expressed in leaves, especially in phloem. Expressed in developing seeds.

It localises to the cell membrane. Functionally, mediates both low-affinity uptake and efflux of sugar across the plasma membrane. Involved in phloem loading by mediating export from parenchyma cells feeding H(+)-coupled import into the sieve element/companion cell complex, thus contributing to the sucrose migration from sites of synthesis in the mesophyll to the phloem. Contributes to seed filling by triggering sucrose efflux involved in the transfer of sugars from seed coat to embryos. The protein is Bidirectional sugar transporter SWEET11 of Arabidopsis thaliana (Mouse-ear cress).